A 692-amino-acid polypeptide reads, in one-letter code: Elongation factor G (692 aa).

The tr-type G domain maps to 8–282 (ENTRNIGIMA…AVIDYLPSPV (275 aa)). GTP-binding positions include 17 to 24 (AHIDAGKT), 81 to 85 (DTPGH), and 135 to 138 (NKMD).

Belongs to the TRAFAC class translation factor GTPase superfamily. Classic translation factor GTPase family. EF-G/EF-2 subfamily.

The protein resides in the cytoplasm. In terms of biological role, catalyzes the GTP-dependent ribosomal translocation step during translation elongation. During this step, the ribosome changes from the pre-translocational (PRE) to the post-translocational (POST) state as the newly formed A-site-bound peptidyl-tRNA and P-site-bound deacylated tRNA move to the P and E sites, respectively. Catalyzes the coordinated movement of the two tRNA molecules, the mRNA and conformational changes in the ribosome. In Lysinibacillus sphaericus (strain C3-41), this protein is Elongation factor G.